Consider the following 173-residue polypeptide: Protein GrpE (173 aa).

The protein belongs to the GrpE family. Homodimer.

The protein resides in the cytoplasm. Functionally, participates actively in the response to hyperosmotic and heat shock by preventing the aggregation of stress-denatured proteins, in association with DnaK and GrpE. It is the nucleotide exchange factor for DnaK and may function as a thermosensor. Unfolded proteins bind initially to DnaJ; upon interaction with the DnaJ-bound protein, DnaK hydrolyzes its bound ATP, resulting in the formation of a stable complex. GrpE releases ADP from DnaK; ATP binding to DnaK triggers the release of the substrate protein, thus completing the reaction cycle. Several rounds of ATP-dependent interactions between DnaJ, DnaK and GrpE are required for fully efficient folding. The polypeptide is Protein GrpE (Campylobacter fetus subsp. fetus (strain 82-40)).